The chain runs to 264 residues: MAKITTASLLNMKQQGKKISTITAYDASFAKLFDQAGIHAILIGDSLGMVLQGQDSTLPVTIEDMAYHTRCVKRGVEETLIIADMPFMSYANEEQALANAALLMQAGASMVKIEGGAWLNGTISALVERGVPVCAHLGLTPQSVNIFGGFKVQGRDDDKAQQMIADAKALEAAGAQLLVLECIPAILGEAITQALTIPTIGIGAGKDTDGQILVMHDALGIACNYMPKFSRNFLKDTGDIKKAVELYISEVSEGNFPGDEHIFK.

2 residues coordinate Mg(2+): Asp45 and Asp84. Residues 45-46, Asp84, and Lys112 each bind 3-methyl-2-oxobutanoate; that span reads DS. Glu114 lines the Mg(2+) pocket. The Proton acceptor role is filled by Glu181.

Belongs to the PanB family. As to quaternary structure, homodecamer; pentamer of dimers. Mg(2+) is required as a cofactor.

The protein localises to the cytoplasm. The enzyme catalyses 3-methyl-2-oxobutanoate + (6R)-5,10-methylene-5,6,7,8-tetrahydrofolate + H2O = 2-dehydropantoate + (6S)-5,6,7,8-tetrahydrofolate. It participates in cofactor biosynthesis; (R)-pantothenate biosynthesis; (R)-pantoate from 3-methyl-2-oxobutanoate: step 1/2. In terms of biological role, catalyzes the reversible reaction in which hydroxymethyl group from 5,10-methylenetetrahydrofolate is transferred onto alpha-ketoisovalerate to form ketopantoate. The protein is 3-methyl-2-oxobutanoate hydroxymethyltransferase of Colwellia psychrerythraea (strain 34H / ATCC BAA-681) (Vibrio psychroerythus).